The following is a 280-amino-acid chain: Thymidylate synthase (280 aa).

A dUMP-binding site is contributed by Arg21. His51 is a (6R)-5,10-methylene-5,6,7,8-tetrahydrofolate binding site. Residue 142–143 (RR) participates in dUMP binding. Cys162 (nucleophile) is an active-site residue. Residues 182-185 (RSAD), Asn193, and 223-225 (HLY) each bind dUMP. A (6R)-5,10-methylene-5,6,7,8-tetrahydrofolate-binding site is contributed by Asp185. (6R)-5,10-methylene-5,6,7,8-tetrahydrofolate is bound at residue Ala279.

It belongs to the thymidylate synthase family. Bacterial-type ThyA subfamily. In terms of assembly, homodimer.

It localises to the cytoplasm. The enzyme catalyses dUMP + (6R)-5,10-methylene-5,6,7,8-tetrahydrofolate = 7,8-dihydrofolate + dTMP. It functions in the pathway pyrimidine metabolism; dTTP biosynthesis. Catalyzes the reductive methylation of 2'-deoxyuridine-5'-monophosphate (dUMP) to 2'-deoxythymidine-5'-monophosphate (dTMP) while utilizing 5,10-methylenetetrahydrofolate (mTHF) as the methyl donor and reductant in the reaction, yielding dihydrofolate (DHF) as a by-product. This enzymatic reaction provides an intracellular de novo source of dTMP, an essential precursor for DNA biosynthesis. This is Thymidylate synthase from Acinetobacter baylyi (strain ATCC 33305 / BD413 / ADP1).